Here is a 328-residue protein sequence, read N- to C-terminus: Lytic polysaccharide monooxygenase aasB (328 aa).

A signal peptide spans 1–18; that stretch reads MKAFFAISASTLLATVHG. A Cu(2+)-binding site is contributed by His19. Cys40 and Cys43 form a disulfide bridge. Asn54 carries an N-linked (GlcNAc...) asparagine glycan. Cystine bridges form between Cys66–Cys245, Cys102–Cys203, Cys118–Cys145, Cys153–Cys161, Cys167–Cys173, and Cys181–Cys192. Residue His109 participates in Cu(2+) binding. Tyr242 is a binding site for Cu(2+). An N-linked (GlcNAc...) asparagine glycan is attached at Asn306.

The protein belongs to the polysaccharide monooxygenase AA13 family. The cofactor is Cu(2+).

It is found in the secreted. The enzyme catalyses starch + reduced acceptor + O2 = D-glucono-1,5-lactone-terminated malto-oligosaccharides + short-chain malto-oligosaccharides + acceptor + H2O.. Functionally, lytic polysaccharide monooxygenase involved in breakdown of granular resistant starch. The chain is Lytic polysaccharide monooxygenase aasB from Emericella nidulans (strain FGSC A4 / ATCC 38163 / CBS 112.46 / NRRL 194 / M139) (Aspergillus nidulans).